The following is a 380-amino-acid chain: Methenyltetrahydrofolate synthase domain-containing protein (380 aa).

Residues 245-258 (EEQAGKDVTLRDGP) are compositionally biased toward basic and acidic residues. Disordered stretches follow at residues 245-283 (EEQA…PLSS) and 361-380 (LVGS…IAGP). One can recognise an RRM domain in the interval 282–355 (SSVQIGNLPR…NTVRVVLARQ (74 aa)).

The protein is Methenyltetrahydrofolate synthase domain-containing protein (MTHFSD) of Bos taurus (Bovine).